A 155-amino-acid chain; its full sequence is Transcriptional regulator MraZ (155 aa).

SpoVT-AbrB domains are found at residues Thr-15–Arg-62 and Ser-93–Ala-136.

This sequence belongs to the MraZ family. As to quaternary structure, forms oligomers.

It is found in the cytoplasm. Its subcellular location is the nucleoid. In Rhodospirillum rubrum (strain ATCC 11170 / ATH 1.1.1 / DSM 467 / LMG 4362 / NCIMB 8255 / S1), this protein is Transcriptional regulator MraZ.